The sequence spans 385 residues: Transmembrane protein 271 (385 aa).

A run of 2 helical transmembrane segments spans residues 9–29 (CAAL…AVGL) and 50–70 (GAFY…AALL). A disordered region spans residues 83–111 (EPGPGLGVPAAPAGAPEATPGESGAAAGA). The chain crosses the membrane as a helical span at residues 121-141 (LLLGVLVFMLGVLSAFAGAVI). Positions 160–203 (PRAPGSSPGSAPGSTPGSAPGSAPGSAPGSAPGAPRARSTLDSA) are disordered. Over residues 163 to 197 (PGSSPGSAPGSTPGSAPGSAPGSAPGSAPGAPRAR) the composition is skewed to low complexity. A helical transmembrane segment spans residues 219–239 (VLSTVFNSLECLLGLLSLLLV). The tract at residues 245–305 (SQARRGRRGR…SEASILSPEE (61 aa)) is disordered. A compositionally biased stretch (basic residues) spans 246 to 258 (QARRGRRGRRRGG). A compositionally biased stretch (low complexity) spans 259-277 (RALARPRGGSGLRAQPPAS). Residues 278–292 (RARRGRRGRRGRRLQ) show a composition bias toward basic residues.

It localises to the membrane. The sequence is that of Transmembrane protein 271 from Homo sapiens (Human).